The primary structure comprises 477 residues: Ankyrin repeat, SAM and basic leucine zipper domain-containing protein 1 (477 aa).

3 positions are modified to phosphoserine: serine 17, serine 18, and serine 20. 6 ANK repeats span residues 46 to 76, 80 to 109, 112 to 146, 150 to 179, 183 to 212, and 216 to 245; these read EKKE…SVDA, YGWT…NASF, DKQT…DPNV, RLMT…EVNT, NGYT…NKML, and DGKL…PLEG. An SAM domain is found at 274–336; the sequence is SYAAFGDLEV…KILAALKELE (63 aa).

In terms of assembly, interacts with DDX4, PIWIL1, RANBP9 and TDRD1.

Its subcellular location is the cytoplasm. Its function is as follows. Plays a central role during spermatogenesis by repressing transposable elements and preventing their mobilization, which is essential for the germline integrity. Acts via the piRNA metabolic process, which mediates the repression of transposable elements during meiosis by forming complexes composed of piRNAs and Piwi proteins and governs the methylation and subsequent repression of transposons. Its association with pi-bodies suggests a participation in the primary piRNAs metabolic process. Required prior to the pachytene stage to facilitate the production of multiple types of piRNAs, including those associated with repeats involved in the regulation of retrotransposons. May act by mediating protein-protein interactions during germ cell maturation. The chain is Ankyrin repeat, SAM and basic leucine zipper domain-containing protein 1 (ASZ1) from Callithrix jacchus (White-tufted-ear marmoset).